The chain runs to 169 residues: S-ribosylhomocysteine lyase (169 aa).

Residues His54, His58, and Cys128 each contribute to the Fe cation site.

Belongs to the LuxS family. Homodimer. It depends on Fe cation as a cofactor.

It catalyses the reaction S-(5-deoxy-D-ribos-5-yl)-L-homocysteine = (S)-4,5-dihydroxypentane-2,3-dione + L-homocysteine. In terms of biological role, involved in the synthesis of autoinducer 2 (AI-2) which is secreted by bacteria and is used to communicate both the cell density and the metabolic potential of the environment. The regulation of gene expression in response to changes in cell density is called quorum sensing. Catalyzes the transformation of S-ribosylhomocysteine (RHC) to homocysteine (HC) and 4,5-dihydroxy-2,3-pentadione (DPD). The sequence is that of S-ribosylhomocysteine lyase from Shewanella halifaxensis (strain HAW-EB4).